Reading from the N-terminus, the 304-residue chain is Germ cell-specific gene 1-like protein (304 aa).

The Cytoplasmic segment spans residues 1-8 (MKTTRKCR). The helical transmembrane segment at 9 to 29 (ALLSVGLNLLALLFSTTAFIT) threads the bilayer. Residues 30–112 (TYWCEGTQRV…FIDLAPASER (83 aa)) are Extracellular-facing. The helical transmembrane segment at 113 to 133 (GVLWLSVVSEVLYIMLLVVGF) threads the bilayer. Over 134–153 (SLMCLELFHSSNVIDGLKLN) the chain is Cytoplasmic. Residues 154–174 (AFAAVFTVLSGLLGMVAHMMY) form a helical membrane-spanning segment. The Extracellular portion of the chain corresponds to 175 to 197 (TQVFQITVSLGPEDWRPHTWDYG). Residues 198-218 (WSFCMAWGSFTCCMAASVTTL) traverse the membrane as a helical segment. Over 219–304 (NSYTKTVIEF…NTESLGEEQC (86 aa)) the chain is Cytoplasmic. The segment covering 266 to 278 (VDVYPSHGSSHGN) has biased composition (polar residues). The tract at residues 266–304 (VDVYPSHGSSHGNSRGKMRSPPAPVDQGDNTESLGEEQC) is disordered.

The protein belongs to the GSG1 family. In terms of assembly, component of the AMPAR complex.

Its subcellular location is the cell membrane. It localises to the synapse. Its function is as follows. As a component of the AMPAR complex, modifies AMPA receptor (AMPAR) gating. In Danio rerio (Zebrafish), this protein is Germ cell-specific gene 1-like protein (gsg1l).